A 370-amino-acid polypeptide reads, in one-letter code: G-protein coupled receptor homolog K2 (370 aa).

The Extracellular portion of the chain corresponds to 1 to 61 (MTSPTNSTML…CTFLEDTKYH (61 aa)). N-linked (GlcNAc...) asparagine; by host glycosylation is found at asparagine 6 and asparagine 51. A helical membrane pass occupies residues 62-82 (IIVIHIILFLLGSIGNIFVVS). Over 83–94 (LIAFKRNKSITD) the chain is Cytoplasmic. The helical transmembrane segment at 95 to 115 (IYILNLSMSDCIFVFQIPFIV) threads the bilayer. Residues 116 to 131 (YSKLDQWIFGNILCKI) are Extracellular-facing. The chain crosses the membrane as a helical span at residues 132 to 152 (MSVLYYVGFFSNMFIITLMSI). At 153-171 (DRYFAIVHPIKRQPYRTKR) the chain is on the cytoplasmic side. A helical transmembrane segment spans residues 172 to 192 (IGILMCCSAWLLSLILSSPVS). Topologically, residues 193 to 223 (KLYENIPHMSKDIYQCTLTNENDSIIAFIKR) are extracellular. The helical transmembrane segment at 224 to 244 (LMQIEITILGFLIPIIIFVYC) threads the bilayer. At 245 to 265 (YYRIFTTVVRLRNRRKYKSIK) the chain is on the cytoplasmic side. The chain crosses the membrane as a helical span at residues 266 to 286 (IVLMIVVCSLICWIPLYIVLM). At 287–300 (IATIVSLYTSNIFR) the chain is on the extracellular side. Residues 301–321 (HLCLYLNLAYAITFSETISLA) form a helical membrane-spanning segment. Residues 322–370 (RCCINPIIYTLIGEHVRSRISSICSCIYRDNRIRKKLFSRKSSSSSNII) lie on the Cytoplasmic side of the membrane.

It belongs to the G-protein coupled receptor 1 family.

The protein resides in the host cell membrane. In terms of biological role, putative chemokine receptor. This chain is G-protein coupled receptor homolog K2, found in Sus scrofa (Pig).